We begin with the raw amino-acid sequence, 163 residues long: Oocyte-secreted protein 1 (163 aa).

The first 21 residues, 1–21 (MKPSSGLRGLLVLFSLTWTCA), serve as a signal peptide directing secretion.

It belongs to the PLAC1 family. As to expression, oocyte-specific.

It is found in the secreted. In terms of biological role, may be involved in cell differentiation. In Bos taurus (Bovine), this protein is Oocyte-secreted protein 1 (OOSP1).